A 399-amino-acid polypeptide reads, in one-letter code: S-adenosylmethionine synthase (399 aa).

His17 is an ATP binding site. Asp19 contacts Mg(2+). Residue Glu45 coordinates K(+). 2 residues coordinate L-methionine: Glu58 and Gln101. The tract at residues 101-111 (QSPDIAQGVDE) is flexible loop. ATP is bound by residues 177–179 (DAK), 244–245 (RF), Asp253, 259–260 (RK), Ala276, and Lys280. Asp253 serves as a coordination point for L-methionine. Lys284 is a binding site for L-methionine.

The protein belongs to the AdoMet synthase family. In terms of assembly, homotetramer; dimer of dimers. Mg(2+) is required as a cofactor. The cofactor is K(+).

The protein localises to the cytoplasm. The catalysed reaction is L-methionine + ATP + H2O = S-adenosyl-L-methionine + phosphate + diphosphate. The protein operates within amino-acid biosynthesis; S-adenosyl-L-methionine biosynthesis; S-adenosyl-L-methionine from L-methionine: step 1/1. Catalyzes the formation of S-adenosylmethionine (AdoMet) from methionine and ATP. The overall synthetic reaction is composed of two sequential steps, AdoMet formation and the subsequent tripolyphosphate hydrolysis which occurs prior to release of AdoMet from the enzyme. The protein is S-adenosylmethionine synthase of Listeria welshimeri serovar 6b (strain ATCC 35897 / DSM 20650 / CCUG 15529 / CIP 8149 / NCTC 11857 / SLCC 5334 / V8).